A 257-amino-acid polypeptide reads, in one-letter code: Glucanase inhibitor protein 1 (257 aa).

An N-terminal signal peptide occupies residues 1–28; it reads MKVFPALTSALVALGTAGVEAEHVQRSL. In terms of domain architecture, Peptidase S1 spans 29–256; sequence VMGGGTVPVG…GLEWINSVIK (228 aa). A disulfide bridge connects residues cysteine 56 and cysteine 72. Asparagine 107 and asparagine 180 each carry an N-linked (GlcNAc...) asparagine glycan. Disulfide bonds link cysteine 181–cysteine 191 and cysteine 201–cysteine 232. An N-linked (GlcNAc...) asparagine glycan is attached at asparagine 213.

The protein belongs to the peptidase S1 family. As to quaternary structure, interacts with host endoglucanases EGaseA.

It localises to the secreted. Functionally, secreted effector that suppresses host plant glucan elicitor-mediated defense responses. Targets host endoglucanase EGaseA and inhibits the EGaseA-mediated release of elicitor-active glucan oligosaccharides from P.sojae cell walls. This Phytophthora sojae (Soybean stem and root rot agent) protein is Glucanase inhibitor protein 1.